Consider the following 181-residue polypeptide: Insulin-like growth factor 2 (181 aa).

An N-terminal signal peptide occupies residues 1 to 24 (MGIPVGKSLLMLFTFLAFASCCIA). Residues 25 to 52 (AYRPSETLCGGELVDTLQFVCGDRGFYF) are b. 3 disulfides stabilise this stretch: C33-C71, C45-C84, and C70-C75. The segment at 53–64 (SRPASRINRRSR) is c. The interval 65-85 (GIVEECCFRSCDLALLETYCA) is a. Positions 86–91 (TPAKSE) are d. Residues 92–181 (RDVSTPPTVL…AFVEVSSDLQ (90 aa)) constitute a propeptide, e peptide. Residue T163 is glycosylated (O-linked (GalNAc...) threonine).

The protein belongs to the insulin family. In terms of assembly, interacts with MYORG; this interaction is required for IGF2 secretion. Interacts with integrins ITGAV:ITGB3 and ITGA6:ITGB4; integrin-binding is required for IGF2 signaling. Interacts with IGFBP2. Proteolytically processed by PCSK4, proIGF2 is cleaved at Arg-128 and Arg-92 to generate big-IGF2 and mature IGF2.

Its subcellular location is the secreted. The insulin-like growth factors possess growth-promoting activity. Major fetal growth hormone in mammals. Plays a key role in regulating fetoplacental development. IGF2 is influenced by placental lactogen. Also involved in tissue differentiation. In adults, involved in glucose metabolism in adipose tissue, skeletal muscle and liver. Acts as a ligand for integrin which is required for IGF2 signaling. Positively regulates myogenic transcription factor MYOD1 function by facilitating the recruitment of transcriptional coactivators, thereby controlling muscle terminal differentiation. Inhibits myoblast differentiation and modulates metabolism via increasing the mitochondrial respiration rate. In terms of biological role, preptin undergoes glucose-mediated co-secretion with insulin, and acts as a physiological amplifier of glucose-mediated insulin secretion. Exhibits osteogenic properties by increasing osteoblast mitogenic activity through phosphoactivation of MAPK1 and MAPK3. This Equus caballus (Horse) protein is Insulin-like growth factor 2.